The primary structure comprises 100 residues: Probable DNA-binding protein HU (100 aa).

This sequence belongs to the bacterial histone-like protein family.

Its function is as follows. Histone-like DNA-binding protein which is capable of wrapping DNA to stabilize it, and thus to prevent its denaturation under extreme environmental conditions. This chain is Probable DNA-binding protein HU (hup), found in Chlamydia muridarum (strain MoPn / Nigg).